A 175-amino-acid polypeptide reads, in one-letter code: MSFMVPTTFAAPQTYRLPCPTIQVQTLGPIVPSVWTIVSRYEPFRQLVVQAHLQDFLNDPQTIVTVMAPLCIPTSQTTQLVCTDASTSPTRVSVLDLSFEASLAMVQSVSVPGVLTTDTMNQSNYTAYRTHHPYRMLHVKSKPTILLNNTSHIVVGNVVASNGLVHIVDQFPMPI.

In terms of domain architecture, FAS1 spans 28–172 (GPIVPSVWTI…GLVHIVDQFP (145 aa)).

In Invertebrate iridescent virus 3 (IIV-3), this protein is Putative FAS1 domain-containing protein 081L.